Consider the following 793-residue polypeptide: E3 UFM1-protein ligase 1 (793 aa).

Alanine 2 carries the N-acetylalanine modification. A mediates interaction with DDRGK1 region spans residues 2-200 (ADAWEEIRRL…RGLFSAITRP (199 aa)). The segment at 2–212 (ADAWEEIRRL…VNSLVSKYGF (211 aa)) is required for E3 UFM1-protein ligase activity. Residues 121–250 (DQLSEEVNDK…KAVFVPDIYS (130 aa)) are involved in CDK5RAP3-binding. The interval 200-400 (PTPVNSLVSK…NPVHLITEED (201 aa)) is mediates interaction with TRIP4. Positions 410–473 (VNTSKKDKKD…SSHGGKKKPD (64 aa)) are disordered. Omega-N-methylarginine is present on arginine 433. Residues serine 458 and serine 462 each carry the phosphoserine modification. A mediates interaction with CDK5RAP3 region spans residues 490-683 (IQDAPEEFIS…QLKVTEDPAL (194 aa)). Residue threonine 535 is modified to Phosphothreonine. The tract at residues 742 to 765 (NKKTGQGEDPSSDELDKEQHDVTN) is disordered. Phosphoserine occurs at positions 752 and 753.

It belongs to the UFL1 family. As to quaternary structure, catalytic component of the UFM1 ribosome E3 ligase (UREL) complex, composed of UFL1, DDRGK1 and CDK5RAP3. Interacts with E2-like enzyme UFC1. Interacts with RELA. Interacts with NBN; promoting recruitment to double-strand breaks following DNA damage. Interacts (when phosphorylated) with YWHAG/14-3-3-gamma; sequestering UFL1 and preventing its association with PDCD1/PD-1 substrate. In terms of processing, ubiquitinated, leading to its degradation by the proteasome. Interaction with CDK5RAP3 protects both proteins against ubiquitination and degradation via the proteasome. Post-translationally, phosphorylated at Ser-462 by ATM, enhancing protein ligase activity and promoting ATM activation in a positive feedback loop. Phosphorylation at Thr-535 by AMPK promotes its interaction with YWHAG/14-3-3-gamma, thereby preventing UFL1 association with PDCD1/PD-1 substrate. In terms of tissue distribution, ubiquitously expressed with higher expression in pancreatic islets and other secretory tissues. In the embryonic brain at 17 dpc, detected in Sox2-positive neural stem cells and in Slc1a3/GLAST-positive radial glia. In perinatal brain, highly expressed in Slc1a3-positive Bergmann glia of the cerebellum. Continues to be expressed in Bergmann glia of adult brain at 16 weeks. Expressed in adult heart. Highly expressed in the intestinal exocrine cells.

It localises to the endoplasmic reticulum membrane. It is found in the cytoplasm. Its subcellular location is the cytosol. The protein localises to the nucleus. The protein resides in the chromosome. Functionally, E3 protein ligase that mediates ufmylation, the covalent attachment of the ubiquitin-like modifier UFM1 to lysine residues on target proteins, and which plays a key role in various processes, such as ribosome recycling, response to DNA damage, interferon response or reticulophagy (also called ER-phagy). Catalyzes ufmylation of many protein, such as CD274/PD-L1, CDK5RAP3, CYB5R3, DDRGK1, EIF6, histone H4, MRE11, P4HB, PDCD1/PD-1, TRIP4, RPN1, RPS20/uS10, RPL10/uL16, RPL26/uL24, SYVN1/HRD1 and TP53/p53. As part of the UREL complex, plays a key role in ribosome recycling by catalyzing mono-ufmylation of RPL26/uL24 subunit of the 60S ribosome. Ufmylation of RPL26/uL24 occurs on free 60S ribosomes following ribosome dissociation: it weakens the junction between post-termination 60S subunits and SEC61 translocons, promoting release and recycling of the large ribosomal subunit from the endoplasmic reticulum membrane. Ufmylation of RPL26/uL24 and subsequent 60S ribosome recycling either take place after normal termination of translation or after ribosome stalling during cotranslational translocation at the endoplasmic reticulum. Involved in reticulophagy in response to endoplasmic reticulum stress by mediating ufmylation of proteins such as CYB5R3 and RPN1, thereby promoting lysosomal degradation of ufmylated proteins. Ufmylation in response to endoplasmic reticulum stress is essential for processes such as hematopoiesis, blood vessel morphogenesis or inflammatory response. Mediates ufmylation of DDRGK1 and CDK5RAP3; the role of these modifications is however unclear: as both DDRGK1 and CDK5RAP3 act as substrate adapters for ufmylation, it is uncertain whether ufmylation of these proteins is a collateral effect or is required for ufmylation. Acts as a negative regulator of T-cell activation by mediating ufmylation and stabilization of PDCD1/PD-1. Also involved in the response to DNA damage: recruited to double-strand break sites following DNA damage and mediates monoufmylation of histone H4 and ufmylation of MRE11. Mediates ufmylation of TP53/p53, promoting its stability. Catalyzes ufmylation of TRIP4, thereby playing a role in nuclear receptor-mediated transcription. Required for hematopoietic stem cell function and hematopoiesis. This is E3 UFM1-protein ligase 1 from Mus musculus (Mouse).